The sequence spans 459 residues: tRNA-2-methylthio-N(6)-dimethylallyladenosine synthase (459 aa).

The MTTase N-terminal domain maps to 1-116; that stretch reads MRAHLITYGC…IGKALETNER (116 aa). Residues cysteine 10, cysteine 46, cysteine 79, cysteine 148, cysteine 152, and cysteine 155 each coordinate [4Fe-4S] cluster. In terms of domain architecture, Radical SAM core spans 134 to 367; it reads PQGKLQAHLT…IAKQKEWSAR (234 aa). The 64-residue stretch at 370 to 433 folds into the TRAM domain; it reads AAKVGTIQEV…PHMLYGRLIG (64 aa).

It belongs to the methylthiotransferase family. MiaB subfamily. In terms of assembly, monomer. Requires [4Fe-4S] cluster as cofactor.

It localises to the cytoplasm. It catalyses the reaction N(6)-dimethylallyladenosine(37) in tRNA + (sulfur carrier)-SH + AH2 + 2 S-adenosyl-L-methionine = 2-methylsulfanyl-N(6)-dimethylallyladenosine(37) in tRNA + (sulfur carrier)-H + 5'-deoxyadenosine + L-methionine + A + S-adenosyl-L-homocysteine + 2 H(+). Catalyzes the methylthiolation of N6-(dimethylallyl)adenosine (i(6)A), leading to the formation of 2-methylthio-N6-(dimethylallyl)adenosine (ms(2)i(6)A) at position 37 in tRNAs that read codons beginning with uridine. This Deinococcus geothermalis (strain DSM 11300 / CIP 105573 / AG-3a) protein is tRNA-2-methylthio-N(6)-dimethylallyladenosine synthase.